The primary structure comprises 637 residues: tRNA uridine 5-carboxymethylaminomethyl modification enzyme MnmG (637 aa).

An FAD-binding site is contributed by 18–23 (GAGHAG). 281 to 295 (GPRYCPSIEDKIVRF) is an NAD(+) binding site.

It belongs to the MnmG family. Homodimer. Heterotetramer of two MnmE and two MnmG subunits. Requires FAD as cofactor.

It is found in the cytoplasm. Its function is as follows. NAD-binding protein involved in the addition of a carboxymethylaminomethyl (cmnm) group at the wobble position (U34) of certain tRNAs, forming tRNA-cmnm(5)s(2)U34. The sequence is that of tRNA uridine 5-carboxymethylaminomethyl modification enzyme MnmG from Ligilactobacillus salivarius (strain UCC118) (Lactobacillus salivarius).